The sequence spans 245 residues: Endonuclease III (245 aa).

The HhH domain maps to 119–138 (MVDLFTLPGVGRKTANVILG). [4Fe-4S] cluster contacts are provided by Cys-198, Cys-205, Cys-208, and Cys-214.

The protein belongs to the Nth/MutY family. [4Fe-4S] cluster serves as cofactor.

The enzyme catalyses 2'-deoxyribonucleotide-(2'-deoxyribose 5'-phosphate)-2'-deoxyribonucleotide-DNA = a 3'-end 2'-deoxyribonucleotide-(2,3-dehydro-2,3-deoxyribose 5'-phosphate)-DNA + a 5'-end 5'-phospho-2'-deoxyribonucleoside-DNA + H(+). DNA repair enzyme that has both DNA N-glycosylase activity and AP-lyase activity. The DNA N-glycosylase activity releases various damaged pyrimidines from DNA by cleaving the N-glycosidic bond, leaving an AP (apurinic/apyrimidinic) site. The AP-lyase activity cleaves the phosphodiester bond 3' to the AP site by a beta-elimination, leaving a 3'-terminal unsaturated sugar and a product with a terminal 5'-phosphate. This is Endonuclease III from Mycobacterium leprae (strain TN).